Here is a 100-residue protein sequence, read N- to C-terminus: Small ribosomal subunit protein bS20 (100 aa).

Residues 79–100 (AAHQKSRLSAAVKQAIEPAPST) are disordered.

Belongs to the bacterial ribosomal protein bS20 family.

Functionally, binds directly to 16S ribosomal RNA. The protein is Small ribosomal subunit protein bS20 of Prochlorococcus marinus (strain MIT 9303).